A 203-amino-acid polypeptide reads, in one-letter code: Akirin-2 (203 aa).

S18 and S21 each carry phosphoserine. A Nuclear localization signal motif is present at residues 22–27 (PKRRRC). S57 carries the phosphoserine modification. Residues 200 to 203 (SYVS) carry the SYVS motif motif.

It belongs to the akirin family. Homodimer. Interacts with IPO9; the interaction is direct. Associates (via SYVS motif) with 20S and 26S proteasomes. Interacts with SMARCD1; promoting SWI/SNF complex recruitment. Interacts with NFKBIZ. Interacts with YWHAB. In terms of processing, polyubiquitinated. Polyubiquitination is dependent of UBR5 that extends pre-ubiquitinated AKIRIN2. Widely expressed with the highest expression in peripheral blood leukocytes.

The protein localises to the nucleus. It localises to the cytoplasm. It is found in the membrane. In terms of biological role, molecular adapter that acts as a bridge between a variety of multiprotein complexes, and which is involved in embryonic development, immunity, myogenesis and brain development. Plays a key role in nuclear protein degradation by promoting import of proteasomes into the nucleus: directly binds to fully assembled 20S proteasomes at one end and to nuclear import receptor IPO9 at the other end, bridging them together and mediating the import of pre-assembled proteasome complexes through the nuclear pore. Involved in innate immunity by regulating the production of interleukin-6 (IL6) downstream of Toll-like receptor (TLR): acts by bridging the NF-kappa-B inhibitor NFKBIZ and the SWI/SNF complex, leading to promote induction of IL6. Also involved in adaptive immunity by promoting B-cell activation. Involved in brain development: required for the survival and proliferation of cerebral cortical progenitor cells. Involved in myogenesis: required for skeletal muscle formation and skeletal development, possibly by regulating expression of muscle differentiation factors. Also plays a role in facilitating interdigital tissue regression during limb development. This Homo sapiens (Human) protein is Akirin-2.